A 554-amino-acid chain; its full sequence is Methyl-coenzyme M reductase II subunit alpha (554 aa).

Glutamine 151 contributes to the coenzyme F430 binding site. Coenzyme B-binding positions include arginine 229, 260-261 (KH), and arginine 274. Coenzyme M is bound by residues tyrosine 336 and tyrosine 447.

Belongs to the methyl-coenzyme M reductase alpha subunit family. MCR is a hexamer of two alpha, two beta, and two gamma chains, forming a dimer of heterotrimers. Coenzyme F430 serves as cofactor.

It carries out the reaction coenzyme B + methyl-coenzyme M = methane + coenzyme M-coenzyme B heterodisulfide. The protein operates within one-carbon metabolism; methyl-coenzyme M reduction; methane from methyl-coenzyme M: step 1/1. Its function is as follows. Component of the methyl-coenzyme M reductase (MCR) I that catalyzes the reductive cleavage of methyl-coenzyme M (CoM-S-CH3 or 2-(methylthio)ethanesulfonate) using coenzyme B (CoB or 7-mercaptoheptanoylthreonine phosphate) as reductant which results in the production of methane and the mixed heterodisulfide of CoB and CoM (CoM-S-S-CoB). This is the final step in methanogenesis. In Methanothermus fervidus (strain ATCC 43054 / DSM 2088 / JCM 10308 / V24 S), this protein is Methyl-coenzyme M reductase II subunit alpha (mrtA).